Consider the following 173-residue polypeptide: Crossover junction endodeoxyribonuclease RuvC (173 aa).

Residues aspartate 8, glutamate 67, and aspartate 139 contribute to the active site. Residues aspartate 8, glutamate 67, and aspartate 139 each coordinate Mg(2+).

The protein belongs to the RuvC family. Homodimer which binds Holliday junction (HJ) DNA. The HJ becomes 2-fold symmetrical on binding to RuvC with unstacked arms; it has a different conformation from HJ DNA in complex with RuvA. In the full resolvosome a probable DNA-RuvA(4)-RuvB(12)-RuvC(2) complex forms which resolves the HJ. Mg(2+) serves as cofactor.

The protein resides in the cytoplasm. It catalyses the reaction Endonucleolytic cleavage at a junction such as a reciprocal single-stranded crossover between two homologous DNA duplexes (Holliday junction).. The RuvA-RuvB-RuvC complex processes Holliday junction (HJ) DNA during genetic recombination and DNA repair. Endonuclease that resolves HJ intermediates. Cleaves cruciform DNA by making single-stranded nicks across the HJ at symmetrical positions within the homologous arms, yielding a 5'-phosphate and a 3'-hydroxyl group; requires a central core of homology in the junction. The consensus cleavage sequence is 5'-(A/T)TT(C/G)-3'. Cleavage occurs on the 3'-side of the TT dinucleotide at the point of strand exchange. HJ branch migration catalyzed by RuvA-RuvB allows RuvC to scan DNA until it finds its consensus sequence, where it cleaves and resolves the cruciform DNA. The protein is Crossover junction endodeoxyribonuclease RuvC of Shewanella frigidimarina (strain NCIMB 400).